The sequence spans 398 residues: Phosphoglycerate kinase (398 aa).

Residues 21-23 (DFN), R36, 59-62 (HLGR), R119, and R157 contribute to the substrate site. ATP is bound by residues K208, G296, E327, and 354 to 357 (GGDS).

This sequence belongs to the phosphoglycerate kinase family. In terms of assembly, monomer.

Its subcellular location is the cytoplasm. It catalyses the reaction (2R)-3-phosphoglycerate + ATP = (2R)-3-phospho-glyceroyl phosphate + ADP. It functions in the pathway carbohydrate degradation; glycolysis; pyruvate from D-glyceraldehyde 3-phosphate: step 2/5. In Streptococcus mutans serotype c (strain ATCC 700610 / UA159), this protein is Phosphoglycerate kinase.